Reading from the N-terminus, the 54-residue chain is Insulin (54 aa).

Intrachain disulfides connect C7–C39, C19–C52, and C38–C43.

It belongs to the insulin family. As to quaternary structure, heterodimer of a B chain and an A chain linked by two disulfide bonds.

It localises to the secreted. Functionally, insulin decreases blood glucose concentration. It increases cell permeability to monosaccharides, amino acids and fatty acids. It accelerates glycolysis, the pentose phosphate cycle, and glycogen synthesis in liver. This Squalus acanthias (Spiny dogfish) protein is Insulin (ins).